Consider the following 55-residue polypeptide: ATP synthase protein 8 (55 aa).

Residues 8–28 (WWIVNFSLIWASVLIVISLLL) traverse the membrane as a helical segment. The segment at 34 to 55 (NSAGQSSSSLTLNKTTTNWQWL) is disordered. Low complexity predominate over residues 39–55 (SSSSLTLNKTTTNWQWL).

It belongs to the ATPase protein 8 family. As to quaternary structure, F-type ATPases have 2 components, CF(1) - the catalytic core - and CF(0) - the membrane proton channel.

Its subcellular location is the mitochondrion membrane. Mitochondrial membrane ATP synthase (F(1)F(0) ATP synthase or Complex V) produces ATP from ADP in the presence of a proton gradient across the membrane which is generated by electron transport complexes of the respiratory chain. F-type ATPases consist of two structural domains, F(1) - containing the extramembraneous catalytic core and F(0) - containing the membrane proton channel, linked together by a central stalk and a peripheral stalk. During catalysis, ATP synthesis in the catalytic domain of F(1) is coupled via a rotary mechanism of the central stalk subunits to proton translocation. Part of the complex F(0) domain. Minor subunit located with subunit a in the membrane. In Strongylocentrotus purpuratus (Purple sea urchin), this protein is ATP synthase protein 8 (MT-ATP8).